A 302-amino-acid chain; its full sequence is RNA polymerase II holoenzyme cyclin-like subunit (302 aa).

The 90-residue stretch at 53–142 (QQLIKLGKRM…VGECEFSLIS (90 aa)) folds into the Cyclin N-terminal domain.

This sequence belongs to the cyclin family. Cyclin C subfamily. As to quaternary structure, component of the srb8-11 complex, a regulatory module of the Mediator complex.

It localises to the nucleus. Functionally, component of the srb8-11 complex. The srb8-11 complex is a regulatory module of the Mediator complex which is itself involved in regulation of basal and activated RNA polymerase II-dependent transcription. The srb8-11 complex may be involved in the transcriptional repression of a subset of genes regulated by Mediator. It may inhibit the association of the Mediator complex with RNA polymerase II to form the holoenzyme complex. The srb8-11 complex phosphorylates the C-terminal domain (CTD) of the largest subunit of RNA polymerase II. This Emericella nidulans (strain FGSC A4 / ATCC 38163 / CBS 112.46 / NRRL 194 / M139) (Aspergillus nidulans) protein is RNA polymerase II holoenzyme cyclin-like subunit (ssn8).